The following is a 317-amino-acid chain: Aspartate carbamoyltransferase catalytic subunit (317 aa).

Carbamoyl phosphate-binding residues include Arg-64 and Thr-65. Lys-92 is an L-aspartate binding site. Arg-114, His-142, and Gln-145 together coordinate carbamoyl phosphate. L-aspartate-binding residues include Arg-176 and Arg-230. Residues Gly-271 and Pro-272 each coordinate carbamoyl phosphate.

This sequence belongs to the aspartate/ornithine carbamoyltransferase superfamily. ATCase family. Heterododecamer (2C3:3R2) of six catalytic PyrB chains organized as two trimers (C3), and six regulatory PyrI chains organized as three dimers (R2).

The catalysed reaction is carbamoyl phosphate + L-aspartate = N-carbamoyl-L-aspartate + phosphate + H(+). Its pathway is pyrimidine metabolism; UMP biosynthesis via de novo pathway; (S)-dihydroorotate from bicarbonate: step 2/3. Catalyzes the condensation of carbamoyl phosphate and aspartate to form carbamoyl aspartate and inorganic phosphate, the committed step in the de novo pyrimidine nucleotide biosynthesis pathway. The chain is Aspartate carbamoyltransferase catalytic subunit from Nitratidesulfovibrio vulgaris (strain ATCC 29579 / DSM 644 / CCUG 34227 / NCIMB 8303 / VKM B-1760 / Hildenborough) (Desulfovibrio vulgaris).